The primary structure comprises 254 residues: Imidazole glycerol phosphate synthase subunit HisF (254 aa).

Residues Asp-11 and Asp-130 contribute to the active site.

This sequence belongs to the HisA/HisF family. As to quaternary structure, heterodimer of HisH and HisF.

It localises to the cytoplasm. It carries out the reaction 5-[(5-phospho-1-deoxy-D-ribulos-1-ylimino)methylamino]-1-(5-phospho-beta-D-ribosyl)imidazole-4-carboxamide + L-glutamine = D-erythro-1-(imidazol-4-yl)glycerol 3-phosphate + 5-amino-1-(5-phospho-beta-D-ribosyl)imidazole-4-carboxamide + L-glutamate + H(+). The protein operates within amino-acid biosynthesis; L-histidine biosynthesis; L-histidine from 5-phospho-alpha-D-ribose 1-diphosphate: step 5/9. Its function is as follows. IGPS catalyzes the conversion of PRFAR and glutamine to IGP, AICAR and glutamate. The HisF subunit catalyzes the cyclization activity that produces IGP and AICAR from PRFAR using the ammonia provided by the HisH subunit. The polypeptide is Imidazole glycerol phosphate synthase subunit HisF (Chromobacterium violaceum (strain ATCC 12472 / DSM 30191 / JCM 1249 / CCUG 213 / NBRC 12614 / NCIMB 9131 / NCTC 9757 / MK)).